The chain runs to 583 residues: Secretogranin-2b (583 aa).

Positions 1–28 are cleaved as a signal peptide; the sequence is MMLSLPKLSAGGVVVLLATLLHTLTVQG. Disordered regions lie at residues 123–159 and 526–583; these read AGESPESQAAGNERRLHKTRRPVADGESPAGDYAGFV and VDNG…VAGM. The span at 534 to 546 shows a compositional bias: basic and acidic residues; that stretch reads AKRDTQGKEEPEG.

The protein belongs to the chromogranin/secretogranin protein family.

Its subcellular location is the secreted. Functionally, neuroendocrine protein of the granin family that regulates the biogenesis of secretory granules. Required for neurovascular modeling of the hindbrain. Acts in a non-cell autonomous manner and is required for migration and proliferation of central artery endothelial cells. Required for normal courting behavior and spawning. This Danio rerio (Zebrafish) protein is Secretogranin-2b.